We begin with the raw amino-acid sequence, 218 residues long: Probable transaldolase (218 aa).

Residue Lys-87 is the Schiff-base intermediate with substrate of the active site.

Belongs to the transaldolase family. Type 3B subfamily.

The protein resides in the cytoplasm. The enzyme catalyses D-sedoheptulose 7-phosphate + D-glyceraldehyde 3-phosphate = D-erythrose 4-phosphate + beta-D-fructose 6-phosphate. The protein operates within carbohydrate degradation; pentose phosphate pathway; D-glyceraldehyde 3-phosphate and beta-D-fructose 6-phosphate from D-ribose 5-phosphate and D-xylulose 5-phosphate (non-oxidative stage): step 2/3. Its function is as follows. Transaldolase is important for the balance of metabolites in the pentose-phosphate pathway. This Bacteroides fragilis (strain ATCC 25285 / DSM 2151 / CCUG 4856 / JCM 11019 / LMG 10263 / NCTC 9343 / Onslow / VPI 2553 / EN-2) protein is Probable transaldolase.